Here is a 95-residue protein sequence, read N- to C-terminus: Integration host factor subunit beta (95 aa).

This sequence belongs to the bacterial histone-like protein family. In terms of assembly, heterodimer of an alpha and a beta chain.

This protein is one of the two subunits of integration host factor, a specific DNA-binding protein that functions in genetic recombination as well as in transcriptional and translational control. The polypeptide is Integration host factor subunit beta (Psychromonas ingrahamii (strain DSM 17664 / CCUG 51855 / 37)).